The chain runs to 186 residues: Ribosome rescue factor SmrB (186 aa).

Residues 99–174 (IDLHGLTQHQ…SDAAIIVIIE (76 aa)) enclose the Smr domain.

This sequence belongs to the SmrB family. In terms of assembly, associates with collided ribosomes, but not with correctly translating polysomes.

Functionally, acts as a ribosome collision sensor. Detects stalled/collided disomes (pairs of ribosomes where the leading ribosome is stalled and a second ribosome has collided with it) and endonucleolytically cleaves mRNA at the 5' boundary of the stalled ribosome. Stalled/collided disomes form a new interface (primarily via the 30S subunits) that binds SmrB. Cleaved mRNA becomes available for tmRNA ligation, leading to ribosomal subunit dissociation and rescue of stalled ribosomes. The polypeptide is Ribosome rescue factor SmrB (Buchnera aphidicola subsp. Acyrthosiphon pisum (strain 5A)).